The primary structure comprises 240 residues: Proteasome subunit alpha (240 aa).

The protein belongs to the peptidase T1A family. The 20S proteasome core is composed of 14 alpha and 14 beta subunits that assemble into four stacked heptameric rings, resulting in a barrel-shaped structure. The two inner rings, each composed of seven catalytic beta subunits, are sandwiched by two outer rings, each composed of seven alpha subunits. The catalytic chamber with the active sites is on the inside of the barrel. Has a gated structure, the ends of the cylinder being occluded by the N-termini of the alpha-subunits. Is capped at one or both ends by the proteasome regulatory ATPase, PAN.

It localises to the cytoplasm. The formation of the proteasomal ATPase PAN-20S proteasome complex, via the docking of the C-termini of PAN into the intersubunit pockets in the alpha-rings, triggers opening of the gate for substrate entry. Interconversion between the open-gate and close-gate conformations leads to a dynamic regulation of the 20S proteasome proteolysis activity. Its function is as follows. Component of the proteasome core, a large protease complex with broad specificity involved in protein degradation. The polypeptide is Proteasome subunit alpha (Metallosphaera sedula (strain ATCC 51363 / DSM 5348 / JCM 9185 / NBRC 15509 / TH2)).